The chain runs to 1159 residues: RNA-directed RNA polymerase (1159 aa).

Residues 545–727 form the RdRp catalytic domain; the sequence is LTYGVLAEDT…KALASYTGLE (183 aa).

This sequence belongs to the reoviridae RNA-directed RNA polymerase family. Interacts with VP3 (Potential). Interacts with VP2 (Potential). Interacts with NSP5; this interaction is probably necessary for the formation of functional virus factories.

The protein localises to the virion. It catalyses the reaction RNA(n) + a ribonucleoside 5'-triphosphate = RNA(n+1) + diphosphate. In terms of biological role, RNA-directed RNA polymerase that is involved in both transcription and genome replication. Together with VP3 capping enzyme, forms an enzyme complex positioned near the channels situated at each of the five-fold vertices of the core. Following infection, the outermost layer of the virus is lost, leaving a double-layered particle (DLP) made up of the core and VP6 shell. VP1 then catalyzes the transcription of fully conservative plus-strand genomic RNAs that are extruded through the DLP's channels into the cytoplasm where they function as mRNAs for translation of viral proteins. One copy of each of the viral (+)RNAs is also recruited during core assembly, together with newly synthesized polymerase complexes and VP2. The polymerase of these novo-formed particles catalyzes the synthesis of complementary minus-strands leading to dsDNA formation. To do so, the polymerase specifically recognizes conserved 3' sequence(s) in plus-strand RNA templates. Once dsRNA synthesis is complete, the polymerase switches to the transcriptional mode, thus providing secondary transcription. This Homo sapiens (Human) protein is RNA-directed RNA polymerase.